The sequence spans 238 residues: ATP synthase subunit a (238 aa).

A run of 5 helical transmembrane segments spans residues 18–38 (LTLL…VFWA), 76–96 (YSLL…LGLF), 114–134 (NLAF…IEGI), 166–186 (SLAI…GLIV), and 193–213 (LYWW…SIFI).

The protein belongs to the ATPase A chain family. In terms of assembly, F-type ATPases have 2 components, CF(1) - the catalytic core - and CF(0) - the membrane proton channel. CF(1) has five subunits: alpha(3), beta(3), gamma(1), delta(1), epsilon(1). CF(0) has three main subunits: a(1), b(2) and c(9-12). The alpha and beta chains form an alternating ring which encloses part of the gamma chain. CF(1) is attached to CF(0) by a central stalk formed by the gamma and epsilon chains, while a peripheral stalk is formed by the delta and b chains.

The protein localises to the cell membrane. Its function is as follows. Key component of the proton channel; it plays a direct role in the translocation of protons across the membrane. This Streptococcus equi subsp. zooepidemicus (strain H70) protein is ATP synthase subunit a.